A 125-amino-acid polypeptide reads, in one-letter code: Holo-[acyl-carrier-protein] synthase (125 aa).

Residues aspartate 8 and glutamate 55 each contribute to the Mg(2+) site.

Belongs to the P-Pant transferase superfamily. AcpS family. Mg(2+) is required as a cofactor.

The protein resides in the cytoplasm. The catalysed reaction is apo-[ACP] + CoA = holo-[ACP] + adenosine 3',5'-bisphosphate + H(+). Its function is as follows. Transfers the 4'-phosphopantetheine moiety from coenzyme A to a Ser of acyl-carrier-protein. The chain is Holo-[acyl-carrier-protein] synthase from Treponema pallidum (strain Nichols).